The sequence spans 202 residues: Phosphoenolpyruvate guanylyltransferase (202 aa).

Residues T140, G156, and S159 each coordinate phosphoenolpyruvate.

Belongs to the CofC family.

It catalyses the reaction phosphoenolpyruvate + GTP + H(+) = enolpyruvoyl-2-diphospho-5'-guanosine + diphosphate. The protein operates within cofactor biosynthesis; coenzyme F420 biosynthesis. In terms of biological role, guanylyltransferase that catalyzes the activation of phosphoenolpyruvate (PEP) as enolpyruvoyl-2-diphospho-5'-guanosine, via the condensation of PEP with GTP. It is involved in the biosynthesis of coenzyme F420, a hydride carrier cofactor. In Chloroflexus aggregans (strain MD-66 / DSM 9485), this protein is Phosphoenolpyruvate guanylyltransferase.